A 318-amino-acid chain; its full sequence is Very-long-chain 3-oxoacyl-CoA reductase-A (318 aa).

Residues 15–35 form a helical membrane-spanning segment; that stretch reads FWYLGVLAAAWWGLRAACCLL. 54–83 contacts NADP(+); the sequence is GKWAVVTGATDGIGKAYAEELARRGMSIVL. 2 consecutive transmembrane segments (helical) span residues 187 to 207 and 281 to 301; these read GVIL…LTVY and AIMG…SMGM. Residue serine 194 coordinates substrate. Residue tyrosine 207 is the Proton acceptor of the active site.

It belongs to the short-chain dehydrogenases/reductases (SDR) family. 17-beta-HSD 3 subfamily.

It is found in the endoplasmic reticulum membrane. The catalysed reaction is a very-long-chain (3R)-3-hydroxyacyl-CoA + NADP(+) = a very-long-chain 3-oxoacyl-CoA + NADPH + H(+). The enzyme catalyses 17beta-estradiol + NAD(+) = estrone + NADH + H(+). It catalyses the reaction 17beta-estradiol + NADP(+) = estrone + NADPH + H(+). Its pathway is lipid metabolism; fatty acid biosynthesis. It functions in the pathway steroid biosynthesis; estrogen biosynthesis. Its function is as follows. Catalyzes the second of the four reactions of the long-chain fatty acids elongation cycle. This endoplasmic reticulum-bound enzymatic process, allows the addition of two carbons to the chain of long- and very long-chain fatty acids/VLCFAs per cycle. This enzyme has a 3-ketoacyl-CoA reductase activity, reducing 3-ketoacyl-CoA to 3-hydroxyacyl-CoA, within each cycle of fatty acid elongation. Thereby, it may participate in the production of VLCFAs of different chain lengths that are involved in multiple biological processes as precursors of membrane lipids and lipid mediators. May also catalyze the transformation of estrone (E1) into estradiol (E2) and play a role in estrogen formation. This Xenopus laevis (African clawed frog) protein is Very-long-chain 3-oxoacyl-CoA reductase-A (hsd17b12-a).